Here is a 307-residue protein sequence, read N- to C-terminus: Barttin (307 aa).

Over 1-5 the chain is Cytoplasmic; that stretch reads MADEK. A regulates channel membrane trafficking and anion conductance region spans residues 1–72; it reads MADEKTFRIG…VPADSDFQGI (72 aa). A helical transmembrane segment spans residues 6-26; that stretch reads TFRIGFIVLGLFLLSLGTFLM. Residues 27-32 are Extracellular-facing; sequence SHDRPQ. The chain crosses the membrane as a helical span at residues 33-53; it reads VYGTFYAMGSVMVIGGVIWSM. S-palmitoyl cysteine attachment occurs at residues Cys54 and Cys56. Residues 54-307 lie on the Cytoplasmic side of the membrane; that stretch reads CQCYPKITFV…ELGFEPDIQG (254 aa). A phosphoserine mark is found at Ser79 and Ser107. Disordered stretches follow at residues 135–154 and 161–224; these read TGAS…WMEA and GSDE…RGPL. Basic and acidic residues predominate over residues 161–171; sequence GSDENEGEKSH. Ser162 carries the post-translational modification Phosphoserine. Residues 172 to 183 are compositionally biased toward low complexity; the sequence is SQSSPSVGPQGS. Residues 198–207 show a composition bias toward polar residues; it reads SEGSSLQPSP. Residues Ser228 and Ser289 each carry the phosphoserine modification. The disordered stretch occupies residues 255-307; that stretch reads RKQQWSLRMKGETVQARAEEPEQEEEDLYYGLPDSPGNPLPDKELGFEPDIQG.

Interacts with CLCNK channels. Forms probably heteromers with CLCNKA in the thin ascending limb of Henle and with CLCNKB in the thick ascending limb and more distal segments. Palmitoylation is necessary for activation of plasma membrane-inserted CLC-K/barttin channels. Expression is evident in inner and outer stripes of the outer medulla of the kidney, most probably representing thin limbs of Henle's loop together with some collecting duct coursing through the outer stripe. In situ hybridization in fetal kidney at 18.5 dpc revealed a clear continuity between hybridization signals from the thin limb of Henle's loop and the distal convoluted tubule, suggesting that part of the expression pattern may result from expression in the thick ascending limb of Henle's loop. In addition, strong signals are present in a subset of cortical tubules, representing distal convoluted tubules or cortical collecting duct. Strong expression is also observed in the inner medulla of the kidney. This expression does not extend all the way to the tip of the papilla. Thus this signal most probably represents cells of the thin ascending limbs. In the inner ear, strong and exclusive expression is detected in marginal cells of the stria vascularis. In addition to cochlear signal, expression is observed in dark cells localized at the base of the crista ampullaris of the vestibular organ.

The protein resides in the basolateral cell membrane. Functionally, regulatory subunit of anion-selective CLCNKA:BSND and CLCNKB:BSND heteromeric channels involved in basolateral chloride conductance along the nephron to achieve urine concentration and maintain systemic acid-base homeostasis, and in the stria vascularis of the inner ear to establish the endocochlear potential necessary for normal hearing. Most likely acts as a chaperone that allosterically regulates proper sorting of CLCNKA:BSND and CLCNKB:BSND channels at the basolateral plasma membrane domain and functional switch to ion conducting state. Mediates constitutive opening of channel common gates. The protein is Barttin of Mus musculus (Mouse).